A 465-amino-acid polypeptide reads, in one-letter code: 3-isopropylmalate dehydratase large subunit (465 aa).

The [4Fe-4S] cluster site is built by cysteine 346, cysteine 406, and cysteine 409.

It belongs to the aconitase/IPM isomerase family. LeuC type 1 subfamily. In terms of assembly, heterodimer of LeuC and LeuD. [4Fe-4S] cluster serves as cofactor.

It carries out the reaction (2R,3S)-3-isopropylmalate = (2S)-2-isopropylmalate. It participates in amino-acid biosynthesis; L-leucine biosynthesis; L-leucine from 3-methyl-2-oxobutanoate: step 2/4. Catalyzes the isomerization between 2-isopropylmalate and 3-isopropylmalate, via the formation of 2-isopropylmaleate. The protein is 3-isopropylmalate dehydratase large subunit of Psychromonas ingrahamii (strain DSM 17664 / CCUG 51855 / 37).